A 101-amino-acid chain; its full sequence is Small ribosomal subunit protein uS14 (101 aa).

It belongs to the universal ribosomal protein uS14 family. In terms of assembly, part of the 30S ribosomal subunit. Contacts proteins S3 and S10.

Binds 16S rRNA, required for the assembly of 30S particles and may also be responsible for determining the conformation of the 16S rRNA at the A site. The chain is Small ribosomal subunit protein uS14 from Methylococcus capsulatus (strain ATCC 33009 / NCIMB 11132 / Bath).